Reading from the N-terminus, the 453-residue chain is Pup--protein ligase (453 aa).

Residue Glu-9 coordinates Mg(2+). Residue Arg-53 coordinates ATP. Position 55 (Tyr-55) interacts with Mg(2+). The active-site Proton acceptor is Asp-57. Glu-63 is a binding site for Mg(2+). The ATP site is built by Thr-66 and Trp-420.

It belongs to the Pup ligase/Pup deamidase family. Pup-conjugating enzyme subfamily.

The catalysed reaction is ATP + [prokaryotic ubiquitin-like protein]-L-glutamate + [protein]-L-lysine = ADP + phosphate + N(6)-([prokaryotic ubiquitin-like protein]-gamma-L-glutamyl)-[protein]-L-lysine.. The protein operates within protein degradation; proteasomal Pup-dependent pathway. Its pathway is protein modification; protein pupylation. Catalyzes the covalent attachment of the prokaryotic ubiquitin-like protein modifier Pup to the proteasomal substrate proteins, thereby targeting them for proteasomal degradation. This tagging system is termed pupylation. The ligation reaction involves the side-chain carboxylate of the C-terminal glutamate of Pup and the side-chain amino group of a substrate lysine. The chain is Pup--protein ligase from Streptomyces griseus subsp. griseus (strain JCM 4626 / CBS 651.72 / NBRC 13350 / KCC S-0626 / ISP 5235).